Consider the following 395-residue polypeptide: NAD(P)H-quinone oxidoreductase subunit H, chloroplastic (395 aa).

Belongs to the complex I 49 kDa subunit family. As to quaternary structure, NDH is composed of at least 16 different subunits, 5 of which are encoded in the nucleus.

The protein localises to the plastid. It is found in the chloroplast thylakoid membrane. It carries out the reaction a plastoquinone + NADH + (n+1) H(+)(in) = a plastoquinol + NAD(+) + n H(+)(out). It catalyses the reaction a plastoquinone + NADPH + (n+1) H(+)(in) = a plastoquinol + NADP(+) + n H(+)(out). Functionally, NDH shuttles electrons from NAD(P)H:plastoquinone, via FMN and iron-sulfur (Fe-S) centers, to quinones in the photosynthetic chain and possibly in a chloroplast respiratory chain. The immediate electron acceptor for the enzyme in this species is believed to be plastoquinone. Couples the redox reaction to proton translocation, and thus conserves the redox energy in a proton gradient. The polypeptide is NAD(P)H-quinone oxidoreductase subunit H, chloroplastic (Dioscorea elephantipes (Elephant's foot yam)).